The sequence spans 449 residues: Integrator complex subunit 15 (449 aa).

The protein belongs to the Integrator subunit 15 family. Component of the Integrator complex, composed of core subunits INTS1, INTS2, INTS3, INTS4, INTS5, INTS6, INTS7, INTS8, INTS9/RC74, INTS10, INTS11/CPSF3L, INTS12, INTS13, INTS14 and INTS15. The core complex associates with protein phosphatase 2A subunits PPP2CA and PPP2R1A, to form the Integrator-PP2A (INTAC) complex. INTS15 is part of the tail subcomplex, composed of INTS10, INTS13, INTS14 and INTS15.

The protein resides in the nucleus. Its subcellular location is the chromosome. Its function is as follows. Component of the integrator complex, a multiprotein complex that terminates RNA polymerase II (Pol II) transcription in the promoter-proximal region of genes. The integrator complex provides a quality checkpoint during transcription elongation by driving premature transcription termination of transcripts that are unfavorably configured for transcriptional elongation: the complex terminates transcription by (1) catalyzing dephosphorylation of the C-terminal domain (CTD) of Pol II subunit POLR2A/RPB1 and SUPT5H/SPT5, (2) degrading the exiting nascent RNA transcript via endonuclease activity and (3) promoting the release of Pol II from bound DNA. The integrator complex is also involved in terminating the synthesis of non-coding Pol II transcripts, such as enhancer RNAs (eRNAs), small nuclear RNAs (snRNAs), telomerase RNAs and long non-coding RNAs (lncRNAs). INTS15 is part of the integrator tail module that acts as a platform for the recruitment of transcription factors at promoters. Within the integrator complex, INTS15 is required to bridge different integrator modules. In Homo sapiens (Human), this protein is Integrator complex subunit 15.